We begin with the raw amino-acid sequence, 357 residues long: ATP-dependent 6-phosphofructokinase 2 (357 aa).

ATP is bound by residues Gly12, 80-81 (KG), and 107-110 (GDGS). Asp108 serves as a coordination point for Mg(2+). Residues 131 to 133 (TID), Arg168, 175 to 177 (MGR), Glu229, Arg272, and 278 to 281 (HIQR) each bind substrate. The active-site Proton acceptor is Asp133.

It belongs to the phosphofructokinase type A (PFKA) family. Mixed-substrate PFK group III subfamily. In terms of assembly, homodimer or homotetramer. Mg(2+) is required as a cofactor.

The protein localises to the cytoplasm. It carries out the reaction beta-D-fructose 6-phosphate + ATP = beta-D-fructose 1,6-bisphosphate + ADP + H(+). The protein operates within carbohydrate degradation; glycolysis; D-glyceraldehyde 3-phosphate and glycerone phosphate from D-glucose: step 3/4. Subject to allosteric activation by ADP and other diphosphonucleosides, and inhibition by phosphoenolpyruvate. Its function is as follows. Catalyzes the phosphorylation of D-fructose 6-phosphate to fructose 1,6-bisphosphate by ATP, the first committing step of glycolysis. The chain is ATP-dependent 6-phosphofructokinase 2 from Nostoc sp. (strain PCC 7120 / SAG 25.82 / UTEX 2576).